Consider the following 210-residue polypeptide: Ribosomal RNA large subunit methyltransferase E (210 aa).

S-adenosyl-L-methionine contacts are provided by Gly-61, Trp-63, Asp-81, Asp-97, and Asp-122. The active-site Proton acceptor is the Lys-162.

The protein belongs to the class I-like SAM-binding methyltransferase superfamily. RNA methyltransferase RlmE family.

It localises to the cytoplasm. It carries out the reaction uridine(2552) in 23S rRNA + S-adenosyl-L-methionine = 2'-O-methyluridine(2552) in 23S rRNA + S-adenosyl-L-homocysteine + H(+). Specifically methylates the uridine in position 2552 of 23S rRNA at the 2'-O position of the ribose in the fully assembled 50S ribosomal subunit. The protein is Ribosomal RNA large subunit methyltransferase E of Xanthomonas axonopodis pv. citri (strain 306).